We begin with the raw amino-acid sequence, 66 residues long: MNKDQIEGEWKNIKGIVKEKWGKLTDNDLTEINGQREQMLGKLQSLYGYSKEQAEKEWKDFQDKHR.

The protein belongs to the UPF0337 (CsbD) family.

This chain is UPF0337 protein pc0632, found in Protochlamydia amoebophila (strain UWE25).